The sequence spans 635 residues: tRNA 5-methylaminomethyl-2-thiouridine biosynthesis bifunctional protein MnmC (635 aa).

Positions 1-227 are tRNA (mnm(5)s(2)U34)-methyltransferase; it reads MSEPIDWLPD…KRSNLQAEFD (227 aa). Residues 254 to 635 form an FAD-dependent cmnm(5)s(2)U34 oxidoreductase region; it reads IGGGLSGAAV…ALSTERLPAD (382 aa).

It in the N-terminal section; belongs to the methyltransferase superfamily. tRNA (mnm(5)s(2)U34)-methyltransferase family. The protein in the C-terminal section; belongs to the DAO family. The cofactor is FAD.

It localises to the cytoplasm. It catalyses the reaction 5-aminomethyl-2-thiouridine(34) in tRNA + S-adenosyl-L-methionine = 5-methylaminomethyl-2-thiouridine(34) in tRNA + S-adenosyl-L-homocysteine + H(+). Catalyzes the last two steps in the biosynthesis of 5-methylaminomethyl-2-thiouridine (mnm(5)s(2)U) at the wobble position (U34) in tRNA. Catalyzes the FAD-dependent demodification of cmnm(5)s(2)U34 to nm(5)s(2)U34, followed by the transfer of a methyl group from S-adenosyl-L-methionine to nm(5)s(2)U34, to form mnm(5)s(2)U34. The polypeptide is tRNA 5-methylaminomethyl-2-thiouridine biosynthesis bifunctional protein MnmC (Paracidovorax citrulli (strain AAC00-1) (Acidovorax citrulli)).